The chain runs to 293 residues: MKYFYIVTNRFKDPDGVNTRKIAHFLRSKGAECVCQIEQEKAFNKTGSYSDVRLVPNNTECVIVLGGDGTLIQASRELSEKDIPFIGVNIGTLGYLTDTDMSSFEETLESLLRDDYEIDRRMMLDGCIYRGEERIFSDMALNDVVINRNGALRIIDFDIYVNGEYLNTYSADGVIVSTATGSTAYSLSAGGPIIQPTARLIMVTPICPHSLNQRSIIFAADDEIMIEMKDNKSSSGRMTGSLKNDSARVATFDGESFCEVVTGDRIVITQSERISRFVKTSRISFLERIRNKM.

Asp68 functions as the Proton acceptor in the catalytic mechanism. NAD(+) contacts are provided by residues 68–69 (DG), 142–143 (ND), Arg153, Asp172, and 183–188 (TAYSLS).

Belongs to the NAD kinase family. A divalent metal cation serves as cofactor.

It is found in the cytoplasm. It carries out the reaction NAD(+) + ATP = ADP + NADP(+) + H(+). In terms of biological role, involved in the regulation of the intracellular balance of NAD and NADP, and is a key enzyme in the biosynthesis of NADP. Catalyzes specifically the phosphorylation on 2'-hydroxyl of the adenosine moiety of NAD to yield NADP. The chain is NAD kinase from Lachnospira eligens (strain ATCC 27750 / DSM 3376 / VPI C15-48 / C15-B4) (Eubacterium eligens).